The chain runs to 414 residues: Phospholipase A1-IIbeta (414 aa).

Lys19 is covalently cross-linked (Glycyl lysine isopeptide (Lys-Gly) (interchain with G-Cter in ubiquitin)). Residues 191–217 (DKTSAQEQVQEELKRLLELYKNEDVTI) adopt a coiled-coil conformation. The active-site Acyl-ester intermediate is Ser223. Active-site charge relay system residues include Ser223, Asp289, and His326. The tract at residues 386–414 (DGTWKLNGDRSKKKQEEEDEKEENNCKFP) is disordered. Positions 390-410 (KLNGDRSKKKQEEEDEKEENN) form a coiled coil. Residues 392-401 (NGDRSKKKQE) show a composition bias toward basic and acidic residues.

The protein belongs to the AB hydrolase superfamily. Lipase family.

The protein resides in the cytoplasm. Its function is as follows. Acylhydrolase that catalyzes the hydrolysis of phospholipids at the sn-1 position. The sequence is that of Phospholipase A1-IIbeta from Arabidopsis thaliana (Mouse-ear cress).